Reading from the N-terminus, the 1064-residue chain is Adenylate cyclase type 4 (1064 aa).

At 1-28 (MARLFSPRPPPSEDLFYETYYSLSQQYP) the chain is on the cytoplasmic side. The next 6 membrane-spanning stretches (helical) occupy residues 29-50 (LLILLLVIVLCAIVALPAVAWA), 61-80 (FLTTVLCALGGFSLLLGLAS), 94-117 (GLIWAALLALGYGFLFTGGVVSAW), 120-138 (VSFFLFIIFTVYAMLPLGM), 141-162 (AAAAGVISSLSHLLVLGLYLGW), and 170-190 (LLPQLAANAVLFLCGNVVGAY). Residues 191–582 (HKALMERALR…YRLSALPAFK (392 aa)) lie on the Cytoplasmic side of the membrane. Asp-278, Ile-279, and Asp-322 together coordinate Mg(2+). ATP contacts are provided by residues 278-283 (DIVGFT), 320-322 (LGD), and Arg-366. Residues 498–523 (DSPASTSTPLPEKAFSPQWSLDRSRT) are disordered. Phosphoserine is present on Ser-517. Position 533 is a phosphothreonine (Thr-533). Transmembrane regions (helical) follow at residues 583-604 (YYAACTFLVFLSNFTIQMLVTT), 608-630 (ALATTYSITFLLFLLLLFVCFSE), and 661-684 (VALGTATILLVFTMAVVSLLFLPV). At 685–707 (SSDCPFLAPNVSSVAFNTSWELP) the chain is on the extracellular side. Residues Asn-694 and Asn-701 are each glycosylated (N-linked (GlcNAc...) asparagine). A run of 3 helical transmembrane segments spans residues 708–733 (ASLPLISIPYSMHCCVLGFLSCSLFL), 741–761 (LLLLLLWLVASCSLFLHSHAW), and 788–804 (MGAIYFFIFFFTLLVLA). At 805–1064 (RQNEYYCRLD…LTRTGSPSAS (260 aa)) the chain is on the cytoplasmic side. ATP is bound by residues Lys-914, 994-996 (DIW), 1001-1005 (NVASR), and Lys-1041.

Belongs to the adenylyl cyclase class-4/guanylyl cyclase family. Mg(2+) serves as cofactor. Mn(2+) is required as a cofactor. Widely distributed.

It localises to the cell membrane. It is found in the cytoplasm. The catalysed reaction is ATP = 3',5'-cyclic AMP + diphosphate. Its activity is regulated as follows. Activated by forskolin. Insensitive to calcium/calmodulin. Stimulated by GNAS and by the G-protein beta and gamma subunit complex. Functionally, catalyzes the formation of the signaling molecule cAMP in response to G-protein signaling. The sequence is that of Adenylate cyclase type 4 (Adcy4) from Rattus norvegicus (Rat).